Consider the following 314-residue polypeptide: Acetyl-coenzyme A carboxylase carboxyl transferase subunit alpha (314 aa).

The region spanning 32–289 (EIDMLEASLE…KSAFVEQLDS (258 aa)) is the CoA carboxyltransferase C-terminal domain.

Belongs to the AccA family. In terms of assembly, acetyl-CoA carboxylase is a heterohexamer composed of biotin carboxyl carrier protein (AccB), biotin carboxylase (AccC) and two subunits each of ACCase subunit alpha (AccA) and ACCase subunit beta (AccD).

Its subcellular location is the cytoplasm. The catalysed reaction is N(6)-carboxybiotinyl-L-lysyl-[protein] + acetyl-CoA = N(6)-biotinyl-L-lysyl-[protein] + malonyl-CoA. Its pathway is lipid metabolism; malonyl-CoA biosynthesis; malonyl-CoA from acetyl-CoA: step 1/1. Functionally, component of the acetyl coenzyme A carboxylase (ACC) complex. First, biotin carboxylase catalyzes the carboxylation of biotin on its carrier protein (BCCP) and then the CO(2) group is transferred by the carboxyltransferase to acetyl-CoA to form malonyl-CoA. This chain is Acetyl-coenzyme A carboxylase carboxyl transferase subunit alpha, found in Staphylococcus aureus (strain bovine RF122 / ET3-1).